Here is a 252-residue protein sequence, read N- to C-terminus: 5'-nucleotidase SurE (252 aa).

A divalent metal cation contacts are provided by aspartate 8, aspartate 9, serine 39, and asparagine 91.

Belongs to the SurE nucleotidase family. Requires a divalent metal cation as cofactor.

The protein resides in the cytoplasm. The enzyme catalyses a ribonucleoside 5'-phosphate + H2O = a ribonucleoside + phosphate. Nucleotidase that shows phosphatase activity on nucleoside 5'-monophosphates. This Bordetella bronchiseptica (strain ATCC BAA-588 / NCTC 13252 / RB50) (Alcaligenes bronchisepticus) protein is 5'-nucleotidase SurE.